A 140-amino-acid polypeptide reads, in one-letter code: Large ribosomal subunit protein uL11 (140 aa).

Belongs to the universal ribosomal protein uL11 family. In terms of assembly, part of the ribosomal stalk of the 50S ribosomal subunit. Interacts with L10 and the large rRNA to form the base of the stalk. L10 forms an elongated spine to which L12 dimers bind in a sequential fashion forming a multimeric L10(L12)X complex. One or more lysine residues are methylated.

Forms part of the ribosomal stalk which helps the ribosome interact with GTP-bound translation factors. The polypeptide is Large ribosomal subunit protein uL11 (Caldanaerobacter subterraneus subsp. tengcongensis (strain DSM 15242 / JCM 11007 / NBRC 100824 / MB4) (Thermoanaerobacter tengcongensis)).